The following is a 245-amino-acid chain: UPF0246 protein cgR_1824 (245 aa).

The protein belongs to the UPF0246 family.

This Corynebacterium glutamicum (strain R) protein is UPF0246 protein cgR_1824.